Here is a 514-residue protein sequence, read N- to C-terminus: Periplasmic [NiFeSe] hydrogenase large subunit (514 aa).

Glutamate 52 is a binding site for Fe cation. Residues cysteine 71 and cysteine 74 each contribute to the Ni(2+) site. Positions 74 and 445 each coordinate Fe cation. Ni(2+) contacts are provided by selenocysteine 493 and cysteine 496. Position 493 (selenocysteine 493) is a non-standard amino acid, selenocysteine. The Fe cation site is built by cysteine 496 and histidine 499.

The protein belongs to the [NiFe]/[NiFeSe] hydrogenase large subunit family. Heterodimer of a large and a small subunit. It depends on Fe cation as a cofactor. Requires Ni(2+) as cofactor.

Its subcellular location is the periplasm. It catalyses the reaction H2 + A = AH2. In Desulfomicrobium baculatum (Desulfovibrio baculatus), this protein is Periplasmic [NiFeSe] hydrogenase large subunit.